The chain runs to 221 residues: Thiol:disulfide interchange protein TlpA (221 aa).

Residues 1–11 (MLDTKPSATRR) are Cytoplasmic-facing. A helical membrane pass occupies residues 12 to 35 (IPLVIATVAVGGLAGFAALYGLGL). Over 36 to 221 (SRAPTGDPAC…AATGKAAAAL (186 aa)) the chain is Periplasmic. 2 disulfide bridges follow: Cys-45–Cys-190 and Cys-107–Cys-110. The Thioredoxin domain occupies 69-215 (ASAPLKLPDL…ALKLIRAATG (147 aa)).

Belongs to the thioredoxin family. In terms of assembly, monomer.

It is found in the cell membrane. Functionally, involved in cytochrome aa3 assembly. The protein is Thiol:disulfide interchange protein TlpA (tlpA) of Bradyrhizobium diazoefficiens (strain JCM 10833 / BCRC 13528 / IAM 13628 / NBRC 14792 / USDA 110).